A 255-amino-acid chain; its full sequence is Ribosomal RNA small subunit methyltransferase A (255 aa).

The S-adenosyl-L-methionine site is built by N12, L14, G39, E60, D84, and N106.

The protein belongs to the class I-like SAM-binding methyltransferase superfamily. rRNA adenine N(6)-methyltransferase family. RsmA subfamily.

The protein resides in the cytoplasm. It catalyses the reaction adenosine(1518)/adenosine(1519) in 16S rRNA + 4 S-adenosyl-L-methionine = N(6)-dimethyladenosine(1518)/N(6)-dimethyladenosine(1519) in 16S rRNA + 4 S-adenosyl-L-homocysteine + 4 H(+). Functionally, specifically dimethylates two adjacent adenosines (A1518 and A1519) in the loop of a conserved hairpin near the 3'-end of 16S rRNA in the 30S particle. May play a critical role in biogenesis of 30S subunits. This is Ribosomal RNA small subunit methyltransferase A from Janthinobacterium sp. (strain Marseille) (Minibacterium massiliensis).